Consider the following 102-residue polypeptide: Small ribosomal subunit protein uS10 (102 aa).

Belongs to the universal ribosomal protein uS10 family. Part of the 30S ribosomal subunit.

Its function is as follows. Involved in the binding of tRNA to the ribosomes. The chain is Small ribosomal subunit protein uS10 from Bacillus cereus (strain ATCC 10987 / NRS 248).